Consider the following 568-residue polypeptide: Protein phosphatase 1 regulatory inhibitor subunit 16B (568 aa).

Residues 15–55 adopt a coiled-coil conformation; sequence EKVPTLERLRAAQKRRAQQLKKWAQYEQDLQHRKRKHERKR. The residue at position 69 (Ser69) is a Phosphoserine. 4 ANK repeats span residues 100-129, 133-162, 228-257, and 261-290; these read DGLTALHQCCIDNFEEIVKLLLSHGANVNA, ELWTPLHAAATCGHINLVKILVQYGADLLA, QGATLLHIAGANGYLRAAELLLDHGVRVDV, and DGWEPLHAAAFWGQMQMAELLVSHGASLSA. Positions 327 to 346 are disordered; it reads RHKSSLSRRTSSAGSRGKVV. Phosphoserine occurs at positions 333, 337, and 350. Over residues 333-342 the composition is skewed to low complexity; it reads SRRTSSAGSR. Positions 373-404 are disordered; it reads SASEDQRNSTYNGDIRETRTDQENKDPNPRLE. Positions 386-404 are enriched in basic and acidic residues; it reads DIRETRTDQENKDPNPRLE. Ser477 is subject to Phosphoserine. A disordered region spans residues 504–525; it reads GSGVSRTGEGSSEGKAPLIGGR. The ANK 5 repeat unit spans residues 531–560; the sequence is SNGTSVYYTVTSGDPPLLKFKAPIEEMEEK. Cys564 is lipidated: S-palmitoyl cysteine. Cys565 is subject to Cysteine methyl ester. A lipid anchor (S-farnesyl cysteine) is attached at Cys565. The propeptide at 566 to 568 is removed in mature form; sequence RIS.

As to quaternary structure, interacts with PPP1CA, PPP1CB and MSN. Interacts (via its fourth ankyrin repeat) with the mature dimeric form of RPSA/LAMR1. Interacts with EEF1A1. Interacts with PTEN. Interacts with ECE1. Phosphorylated by PKA and, after PKA priming, by GSK3B. Phosphorylation by GSK3B reduces its association with PP1C and enhances PP1C activity. Dephosphorylation by its associated PP1C results in enhanced association with PP1C, but reduced PP1C activity.

The protein localises to the cell membrane. Its subcellular location is the nucleus. It localises to the cell projection. Its function is as follows. Regulator of protein phosphatase 1 (PP1) that acts as a positive regulator of pulmonary endothelial cell (EC) barrier function. Protects the endothelial barrier from lipopolysaccharide (LPS)-induced vascular leakage. Involved in the regulation of the PI3K/AKT signaling pathway. Involved in the regulation of angiogenesis and endothelial cell proliferation through the control of ECE1 dephosphorylation, trafficking and activity. Involved in the regulation of endothelial cell filopodia extension. May be a downstream target for TGF-beta1 signaling cascade in endothelial cells. Involved in PKA-mediated moesin dephosphorylation which is important in EC barrier protection against thrombin stimulation. Promotes the interaction of PPP1CA with RPSA/LAMR1 and in turn facilitates the dephosphorylation of RPSA/LAMR1. Involved in the dephosphorylation of EEF1A1. The protein is Protein phosphatase 1 regulatory inhibitor subunit 16B (PPP1R16B) of Bos taurus (Bovine).